We begin with the raw amino-acid sequence, 444 residues long: Glutamyl-tRNA reductase (444 aa).

Substrate-binding positions include 49–52 (TCNR), serine 117, 122–124 (EPQ), and glutamine 128. The Nucleophile role is filled by cysteine 50. NADP(+) is bound at residue 202-207 (GAGETI).

This sequence belongs to the glutamyl-tRNA reductase family. As to quaternary structure, homodimer.

It catalyses the reaction (S)-4-amino-5-oxopentanoate + tRNA(Glu) + NADP(+) = L-glutamyl-tRNA(Glu) + NADPH + H(+). Its pathway is porphyrin-containing compound metabolism; protoporphyrin-IX biosynthesis; 5-aminolevulinate from L-glutamyl-tRNA(Glu): step 1/2. In terms of biological role, catalyzes the NADPH-dependent reduction of glutamyl-tRNA(Glu) to glutamate 1-semialdehyde (GSA). This is Glutamyl-tRNA reductase from Mannheimia succiniciproducens (strain KCTC 0769BP / MBEL55E).